The primary structure comprises 191 residues: MAGAAEDARALFRAGVCAALEAWPALQIAVENGFGGVHSQEKAKWLGGAVEDYFMRNADLELDEVEDFLGELLTNEFDTVVEDGSLPQVSQQLQTMFHHFQRGDGAALREMASCITQRKCKVTATALKTARETDEDEDDVDSVEEMEVTATNDGAATDGVCPQPEPSDPDAQTIKEEDIVEDGWTIVRRKK.

Residues 149–172 form a disordered region; the sequence is TATNDGAATDGVCPQPEPSDPDAQ.

The protein belongs to the TSR2 family.

Functionally, may be involved in 20S pre-rRNA processing. This is Pre-rRNA-processing protein TSR2 homolog (TSR2) from Homo sapiens (Human).